The sequence spans 43 residues: uncharacterized protein (43 aa).

A helical transmembrane segment spans residues 21-41 (SSFALIVVLFILLIIVGAAIF).

This sequence belongs to the SscA family.

The protein resides in the membrane. This is an uncharacterized protein from Bacillus subtilis (strain 168).